The primary structure comprises 338 residues: Aspartate-semialdehyde dehydrogenase (338 aa).

NADP(+) is bound by residues 13–16 (TGNV) and 41–42 (NS). Position 101 (Arg101) interacts with phosphate. Cys132 functions as the Acyl-thioester intermediate in the catalytic mechanism. Gln159 contributes to the substrate binding site. NADP(+) is bound by residues 162–163 (SG) and Pro187. Residue Lys216 coordinates phosphate. Substrate is bound at residue Arg237. Catalysis depends on His244, which acts as the Proton acceptor. Asn317 lines the NADP(+) pocket.

The protein belongs to the aspartate-semialdehyde dehydrogenase family. In terms of assembly, homodimer.

It carries out the reaction L-aspartate 4-semialdehyde + phosphate + NADP(+) = 4-phospho-L-aspartate + NADPH + H(+). It participates in amino-acid biosynthesis; L-lysine biosynthesis via DAP pathway; (S)-tetrahydrodipicolinate from L-aspartate: step 2/4. The protein operates within amino-acid biosynthesis; L-methionine biosynthesis via de novo pathway; L-homoserine from L-aspartate: step 2/3. Its pathway is amino-acid biosynthesis; L-threonine biosynthesis; L-threonine from L-aspartate: step 2/5. Its function is as follows. Catalyzes the NADPH-dependent formation of L-aspartate-semialdehyde (L-ASA) by the reductive dephosphorylation of L-aspartyl-4-phosphate. The protein is Aspartate-semialdehyde dehydrogenase of Rickettsia typhi (strain ATCC VR-144 / Wilmington).